The primary structure comprises 33 residues: GFLDSFKNAMIGVAKSVGKTALSTLACKIDKSC.

Cysteines 27 and 33 form a disulfide.

In terms of tissue distribution, expressed by the skin glands.

It is found in the secreted. In terms of biological role, has antibacterial activity against the Gram-positive bacterium S.aureus ATCC 25923 (MIC=36 uM) and the Gram-negative bacterium E.coli ATCC 25726 (MIC=18 uM). The sequence is that of Brevinin-2PTe from Pulchrana picturata (Malaysian fire frog).